The following is a 336-amino-acid chain: Fructose-1,6-bisphosphatase class 1 (336 aa).

The Mg(2+) site is built by Glu-90, Asp-112, Leu-114, and Asp-115. Substrate is bound by residues 115 to 118 (DGSS), Asn-211, and Lys-277. Residue Glu-283 coordinates Mg(2+).

Belongs to the FBPase class 1 family. Homotetramer. The cofactor is Mg(2+).

It is found in the cytoplasm. It catalyses the reaction beta-D-fructose 1,6-bisphosphate + H2O = beta-D-fructose 6-phosphate + phosphate. It participates in carbohydrate biosynthesis; gluconeogenesis. The polypeptide is Fructose-1,6-bisphosphatase class 1 (Pseudomonas aeruginosa (strain UCBPP-PA14)).